Here is a 326-residue protein sequence, read N- to C-terminus: 5-dehydro-2-deoxygluconokinase (326 aa).

Belongs to the carbohydrate kinase PfkB family.

The catalysed reaction is 5-dehydro-2-deoxy-D-gluconate + ATP = 6-phospho-5-dehydro-2-deoxy-D-gluconate + ADP + H(+). Its pathway is polyol metabolism; myo-inositol degradation into acetyl-CoA; acetyl-CoA from myo-inositol: step 5/7. In terms of biological role, catalyzes the phosphorylation of 5-dehydro-2-deoxy-D-gluconate (2-deoxy-5-keto-D-gluconate or DKG) to 6-phospho-5-dehydro-2-deoxy-D-gluconate (DKGP). This chain is 5-dehydro-2-deoxygluconokinase, found in Lacticaseibacillus casei (Lactobacillus casei).